The primary structure comprises 1262 residues: Tau-tubulin kinase homolog Asator (1262 aa).

The disordered stretch occupies residues 13 to 35 (NASAPDDGNQSCQPSSKQDQYLS). Over residues 20 to 35 (GNQSCQPSSKQDQYLS) the composition is skewed to polar residues. The Protein kinase domain occupies 173-436 (WKVVRKIGGG…MLIGLFERCM (264 aa)). Residues 179 to 187 (IGGGGFGEI) and lysine 202 each bind ATP. The active-site Proton acceptor is the aspartate 293. Disordered stretches follow at residues 662-724 (TVTN…TSNA), 755-792 (RSAT…ARSS), and 984-1003 (KDSA…SRHR). The segment covering 667–679 (KTSEVNRSTEEQK) has biased composition (basic and acidic residues). The segment covering 755–776 (RSATSTNLRPSSSASQRINSGS) has biased composition (polar residues).

It belongs to the protein kinase superfamily. CK1 Ser/Thr protein kinase family. In terms of assembly, interacts with Mgtor. Mg(2+) is required as a cofactor. As to expression, detected in larval brain.

It localises to the cytoplasm. Its subcellular location is the cytoskeleton. The protein localises to the spindle. It catalyses the reaction L-seryl-[protein] + ATP = O-phospho-L-seryl-[protein] + ADP + H(+). The enzyme catalyses L-threonyl-[protein] + ATP = O-phospho-L-threonyl-[protein] + ADP + H(+). Its function is as follows. Probable serine/threonine protein kinase. This chain is Tau-tubulin kinase homolog Asator, found in Drosophila melanogaster (Fruit fly).